The primary structure comprises 217 residues: Adenylate kinase (217 aa).

10 to 15 (GAGKGT) serves as a coordination point for ATP. The NMP stretch occupies residues 30–59 (STGDIFRSNVSQGTPLGVQAKRYMDAGELV). AMP is bound by residues threonine 31, arginine 36, 57–59 (ELV), 85–88 (GFPR), and glutamine 92. An LID region spans residues 126 to 163 (GRRTCRGCGKVWHVEFDAPSQEGRCDRCGAELFQRDDD). Arginine 127 contributes to the ATP binding site. Zn(2+) is bound by residues cysteine 130, cysteine 133, cysteine 150, and cysteine 153. The AMP site is built by arginine 160 and arginine 171. Glycine 199 is a binding site for ATP.

The protein belongs to the adenylate kinase family. As to quaternary structure, monomer.

It localises to the cytoplasm. The enzyme catalyses AMP + ATP = 2 ADP. Its pathway is purine metabolism; AMP biosynthesis via salvage pathway; AMP from ADP: step 1/1. In terms of biological role, catalyzes the reversible transfer of the terminal phosphate group between ATP and AMP. Plays an important role in cellular energy homeostasis and in adenine nucleotide metabolism. This is Adenylate kinase from Salinispora tropica (strain ATCC BAA-916 / DSM 44818 / JCM 13857 / NBRC 105044 / CNB-440).